A 292-amino-acid chain; its full sequence is Zinc finger protein OZF (292 aa).

C2H2-type zinc fingers lie at residues 16–38 (FACK…EHFH), 44–66 (FECN…QSTH), 72–94 (FECS…QKIH), 100–122 (FECK…QRTH), 128–150 (FICK…EKIH), 156–178 (FKCN…QNIH), 184–206 (YECN…VRIH), 212–234 (YECN…VRSH), 240–262 (YGCN…LRIH), and 268–290 (YQCS…QKIH). Residues lysine 28, lysine 51, and lysine 56 each participate in a glycyl lysine isopeptide (Lys-Gly) (interchain with G-Cter in SUMO2) cross-link. Residues lysine 157 and lysine 169 each participate in a glycyl lysine isopeptide (Lys-Gly) (interchain with G-Cter in SUMO) cross-link. Residue lysine 173 forms a Glycyl lysine isopeptide (Lys-Gly) (interchain with G-Cter in SUMO2) linkage. The interaction with TERF2IP stretch occupies residues 212–292 (YECNVCGKAF…HIRHQKIHTH (81 aa)).

It belongs to the krueppel C2H2-type zinc-finger protein family. In terms of assembly, binds DNA. Interacts with SUMO conjugating enzyme UBC9/UBE2I. Interacts with the telomeric protein TERF2IP. In terms of tissue distribution, expressed in heart, brain, liver, lung, skeletal muscle and kidney, and at much lower level in spleen and testicle. Expressed in lactating mammary gland.

It is found in the nucleus. This Mus musculus (Mouse) protein is Zinc finger protein OZF (Znf146).